An 87-amino-acid polypeptide reads, in one-letter code: NADH-ubiquinone oxidoreductase chain 4L (87 aa).

2 helical membrane passes run 22–42 (FLSF…FIIG) and 49–69 (LFLI…SLLV).

The protein belongs to the complex I subunit 4L family.

The protein resides in the mitochondrion membrane. It catalyses the reaction a ubiquinone + NADH + 5 H(+)(in) = a ubiquinol + NAD(+) + 4 H(+)(out). Core subunit of the mitochondrial membrane respiratory chain NADH dehydrogenase (Complex I) that is believed to belong to the minimal assembly required for catalysis. Complex I functions in the transfer of electrons from NADH to the respiratory chain. The immediate electron acceptor for the enzyme is believed to be ubiquinone. The polypeptide is NADH-ubiquinone oxidoreductase chain 4L (ND4L) (Apis mellifera ligustica (Common honeybee)).